Reading from the N-terminus, the 305-residue chain is 4-diphosphocytidyl-2-C-methyl-D-erythritol kinase (305 aa).

Lysine 10 is an active-site residue. 95 to 105 is a binding site for ATP; it reads PVTAGLGGGSS. Aspartate 136 is a catalytic residue. The segment at 286-305 is disordered; sequence PGVTPWRSPRSASSPSTKRS. A compositionally biased stretch (low complexity) spans 290-305; it reads PWRSPRSASSPSTKRS.

This sequence belongs to the GHMP kinase family. IspE subfamily.

It catalyses the reaction 4-CDP-2-C-methyl-D-erythritol + ATP = 4-CDP-2-C-methyl-D-erythritol 2-phosphate + ADP + H(+). Its pathway is isoprenoid biosynthesis; isopentenyl diphosphate biosynthesis via DXP pathway; isopentenyl diphosphate from 1-deoxy-D-xylulose 5-phosphate: step 3/6. In terms of biological role, catalyzes the phosphorylation of the position 2 hydroxy group of 4-diphosphocytidyl-2C-methyl-D-erythritol. In Anaeromyxobacter sp. (strain Fw109-5), this protein is 4-diphosphocytidyl-2-C-methyl-D-erythritol kinase.